The primary structure comprises 484 residues: Replication factor C large subunit (484 aa).

46–53 is an ATP binding site; the sequence is GPPGSGKT. Composition is skewed to basic and acidic residues over residues 419–432, 442–451, and 459–478; these read VKTE…KTKE, RISEPPEPLK, and KSVE…KKQA. The tract at residues 419–484 is disordered; that stretch reads VKTETPKKKE…KKQATLDSFF (66 aa).

The protein belongs to the activator 1 small subunits family. RfcL subfamily. In terms of assembly, heteromultimer composed of small subunits (RfcS) and large subunits (RfcL).

Part of the RFC clamp loader complex which loads the PCNA sliding clamp onto DNA. This Methanococcus maripaludis (strain C5 / ATCC BAA-1333) protein is Replication factor C large subunit.